The primary structure comprises 215 residues: MTFNIIKLENWDRKEYFEHYFNQQTTYSITKEIDITLFKDMSKKKGYEIYPSLIYAIMEVVNKNKVFRTGINSENKLGYWDKLNPLYTVFNKQTEKFTNIWTESDNNFTSFYNNYKNDLLEYKDKEEMFPKKPIPENTLPISMIPWIDFSSFNLNIGNNSNFLLPIITIGKFYSENNKIYIPVALQLHHAVCDGYHASLFINEFQDIIKKVDDWI.

Histidine 189 acts as the Proton acceptor in catalysis.

This sequence belongs to the chloramphenicol acetyltransferase family. Homotrimer.

It catalyses the reaction chloramphenicol + acetyl-CoA = chloramphenicol 3-acetate + CoA. This enzyme is an effector of chloramphenicol resistance in bacteria. The protein is Chloramphenicol acetyltransferase (cat) of Staphylococcus aureus.